A 343-amino-acid polypeptide reads, in one-letter code: MGAVDERQRAIDTAVSQIERMCGKGAIMRLGEGAQNVEIPVISTGCLSLDLALGIGGVARGRIMEIFGPESSGKTTLALHVVAEAQKLGGLAAFIDAEHALDVNYARKLGVQVEDLLISQPDYGEQALEIAEILVRSNAIDVIVVDSVAALVPKAEIEGEMGDPHVGLQARLMSQALRKLVSSISKSRTCVIFINQIRMKIGVMYGSPETTTGGNALKFYATMRLDIRRVGPIKDGQEVVGNRTRVKVVKNKIAPPFREVEFDVVYGRGISREGDILDLAVESGAIEKSGTWYSYSGERLGQGRENAKNFLREHPDLLGELERKLREAHNLRFSPGPVTGAGE.

Residue 68 to 75 (GPESSGKT) coordinates ATP.

It belongs to the RecA family.

It is found in the cytoplasm. In terms of biological role, can catalyze the hydrolysis of ATP in the presence of single-stranded DNA, the ATP-dependent uptake of single-stranded DNA by duplex DNA, and the ATP-dependent hybridization of homologous single-stranded DNAs. It interacts with LexA causing its activation and leading to its autocatalytic cleavage. The chain is Protein RecA from Syntrophobacter fumaroxidans (strain DSM 10017 / MPOB).